Reading from the N-terminus, the 473-residue chain is Photosystem II CP43 reaction center protein (473 aa).

Positions 1-14 (MKILYSQRRFYHVE) are excised as a propeptide. The residue at position 15 (Thr15) is an N-acetylthreonine. The residue at position 15 (Thr15) is a Phosphothreonine. Transmembrane regions (helical) follow at residues 69–93 (LFEV…PHLA), 134–155 (LIGP…KDKN), 178–200 (KALY…RKIT), 255–275 (KPFA…LSYS), and 291–312 (WFNN…ASQA). Glu367 contacts [CaMn4O5] cluster. Residues 447–471 (RARAAAAGFEKGIDRDFEPVLSMTP) form a helical membrane-spanning segment.

It belongs to the PsbB/PsbC family. PsbC subfamily. PSII is composed of 1 copy each of membrane proteins PsbA, PsbB, PsbC, PsbD, PsbE, PsbF, PsbH, PsbI, PsbJ, PsbK, PsbL, PsbM, PsbT, PsbX, PsbY, PsbZ, Psb30/Ycf12, at least 3 peripheral proteins of the oxygen-evolving complex and a large number of cofactors. It forms dimeric complexes. Binds multiple chlorophylls and provides some of the ligands for the Ca-4Mn-5O cluster of the oxygen-evolving complex. It may also provide a ligand for a Cl- that is required for oxygen evolution. PSII binds additional chlorophylls, carotenoids and specific lipids. is required as a cofactor.

It is found in the plastid. It localises to the chloroplast thylakoid membrane. Functionally, one of the components of the core complex of photosystem II (PSII). It binds chlorophyll and helps catalyze the primary light-induced photochemical processes of PSII. PSII is a light-driven water:plastoquinone oxidoreductase, using light energy to abstract electrons from H(2)O, generating O(2) and a proton gradient subsequently used for ATP formation. The protein is Photosystem II CP43 reaction center protein of Physcomitrium patens (Spreading-leaved earth moss).